A 101-amino-acid polypeptide reads, in one-letter code: Protein Tat (101 aa).

The span at 1–12 (MDPVDPRLEPWK) shows a compositional bias: basic and acidic residues. Residues 1–20 (MDPVDPRLEPWKHPGSQPKA) are disordered. An interaction with human CREBBP region spans residues 1–24 (MDPVDPRLEPWKHPGSQPKAACTS). A transactivation region spans residues 1-48 (MDPVDPRLEPWKHPGSQPKAACTSCYCKKCCFHCQVCFTTKGLGISYG). Zn(2+) is bound by residues Cys-22, Cys-25, and Cys-27. The interval 22–37 (CTSCYCKKCCFHCQVC) is cysteine-rich. The residue at position 28 (Lys-28) is an N6-acetyllysine; by host PCAF. Cys-30, His-33, Cys-34, and Cys-37 together coordinate Zn(2+). The segment at 38 to 48 (FTTKGLGISYG) is core. Residues 48–57 (GRKKRRQRRR) show a composition bias toward basic residues. Positions 48-101 (GRKKRRQRRRAPQDSQTHQVSLPKQPASQARGDPTGPKESKKKVERETETDPVD) are disordered. The Nuclear localization signal, RNA-binding (TAR), and protein transduction signature appears at 49-57 (RKKRRQRRR). Positions 49 to 86 (RKKRRQRRRAPQDSQTHQVSLPKQPASQARGDPTGPKE) are interaction with the host capping enzyme RNGTT. An N6-acetyllysine; by host EP300 and GCN5L2 mark is found at Lys-50 and Lys-51. Arg-52 and Arg-53 each carry asymmetric dimethylarginine; by host PRMT6. Over residues 60–75 (QDSQTHQVSLPKQPAS) the composition is skewed to polar residues. A Glycyl lysine isopeptide (Lys-Gly) (interchain with G-Cter in ubiquitin) cross-link involves residue Lys-71. A Cell attachment site motif is present at residues 78–80 (RGD). The span at 83 to 101 (GPKESKKKVERETETDPVD) shows a compositional bias: basic and acidic residues.

It belongs to the lentiviruses Tat family. Interacts with host CCNT1. Associates with the P-TEFb complex composed at least of Tat, P-TEFb (CDK9 and CCNT1), TAR RNA, RNA Pol II. Recruits the HATs CREBBP, TAF1/TFIID, EP300, PCAF and GCN5L2. Interacts with host KAT5/Tip60; this interaction targets the latter to degradation. Interacts with the host deacetylase SIRT1. Interacts with host capping enzyme RNGTT; this interaction stimulates RNGTT. Binds to host KDR, and to the host integrins ITGAV/ITGB3 and ITGA5/ITGB1. Interacts with host KPNB1/importin beta-1 without previous binding to KPNA1/importin alpha-1. Interacts with EIF2AK2. Interacts with host nucleosome assembly protein NAP1L1; this interaction may be required for the transport of Tat within the nucleus, since the two proteins interact at the nuclear rim. Interacts with host C1QBP/SF2P32; this interaction involves lysine-acetylated Tat. Interacts with the host chemokine receptors CCR2, CCR3 and CXCR4. Interacts with host DPP4/CD26; this interaction may trigger an anti-proliferative effect. Interacts with host LDLR. Interacts with the host extracellular matrix metalloproteinase MMP1. Interacts with host PRMT6; this interaction mediates Tat's methylation. Interacts with, and is ubiquitinated by MDM2/Hdm2. Interacts with host PSMC3 and HTATIP2. Interacts with STAB1; this interaction may overcome SATB1-mediated repression of IL2 and IL2RA (interleukin) in T cells by binding to the same domain than HDAC1. Interacts (when acetylated) with human CDK13, thereby increasing HIV-1 mRNA splicing and promoting the production of the doubly spliced HIV-1 protein Nef. Interacts with host TBP; this interaction modulates the activity of transcriptional pre-initiation complex. Interacts with host RELA. Interacts with host PLSCR1; this interaction negatively regulates Tat transactivation activity by altering its subcellular distribution. In terms of processing, asymmetrical arginine methylation by host PRMT6 seems to diminish the transactivation capacity of Tat and affects the interaction with host CCNT1. Acetylation by EP300, CREBBP, GCN5L2/GCN5 and PCAF regulates the transactivation activity of Tat. EP300-mediated acetylation of Lys-50 promotes dissociation of Tat from the TAR RNA through the competitive binding to PCAF's bromodomain. In addition, the non-acetylated Tat's N-terminus can also interact with PCAF. PCAF-mediated acetylation of Lys-28 enhances Tat's binding to CCNT1. Lys-50 is deacetylated by SIRT1. Post-translationally, polyubiquitination by host MDM2 does not target Tat to degradation, but activates its transactivation function and fosters interaction with CCNT1 and TAR RNA. In terms of processing, phosphorylated by EIF2AK2 on serine and threonine residues adjacent to the basic region important for TAR RNA binding and function. Phosphorylation of Tat by EIF2AK2 is dependent on the prior activation of EIF2AK2 by dsRNA.

It localises to the host nucleus. The protein localises to the host nucleolus. The protein resides in the host cytoplasm. It is found in the secreted. Functionally, transcriptional activator that increases RNA Pol II processivity, thereby increasing the level of full-length viral transcripts. Recognizes a hairpin structure at the 5'-LTR of the nascent viral mRNAs referred to as the transactivation responsive RNA element (TAR) and recruits the cyclin T1-CDK9 complex (P-TEFb complex) that will in turn hyperphosphorylate the RNA polymerase II to allow efficient elongation. The CDK9 component of P-TEFb and other Tat-activated kinases hyperphosphorylate the C-terminus of RNA Pol II that becomes stabilized and much more processive. Other factors such as HTATSF1/Tat-SF1, SUPT5H/SPT5, and HTATIP2 are also important for Tat's function. Besides its effect on RNA Pol II processivity, Tat induces chromatin remodeling of proviral genes by recruiting the histone acetyltransferases (HATs) CREBBP, EP300 and PCAF to the chromatin. This also contributes to the increase in proviral transcription rate, especially when the provirus integrates in transcriptionally silent region of the host genome. To ensure maximal activation of the LTR, Tat mediates nuclear translocation of NF-kappa-B by interacting with host RELA. Through its interaction with host TBP, Tat may also modulate transcription initiation. Tat can reactivate a latently infected cell by penetrating in it and transactivating its LTR promoter. In the cytoplasm, Tat is thought to act as a translational activator of HIV-1 mRNAs. Its function is as follows. Extracellular circulating Tat can be endocytosed by surrounding uninfected cells via the binding to several surface receptors such as CD26, CXCR4, heparan sulfate proteoglycans (HSPG) or LDLR. Neurons are rarely infected, but they internalize Tat via their LDLR. Through its interaction with nuclear HATs, Tat is potentially able to control the acetylation-dependent cellular gene expression. Modulates the expression of many cellular genes involved in cell survival, proliferation or in coding for cytokines or cytokine receptors. Tat plays a role in T-cell and neurons apoptosis. Tat induced neurotoxicity and apoptosis probably contribute to neuroAIDS. Circulating Tat also acts as a chemokine-like and/or growth factor-like molecule that binds to specific receptors on the surface of the cells, affecting many cellular pathways. In the vascular system, Tat binds to ITGAV/ITGB3 and ITGA5/ITGB1 integrins dimers at the surface of endothelial cells and competes with bFGF for heparin-binding sites, leading to an excess of soluble bFGF. The chain is Protein Tat from Homo sapiens (Human).